The primary structure comprises 75 residues: Large ribosomal subunit protein uL29 (75 aa).

The protein belongs to the universal ribosomal protein uL29 family.

The chain is Large ribosomal subunit protein uL29 from Pyrobaculum aerophilum (strain ATCC 51768 / DSM 7523 / JCM 9630 / CIP 104966 / NBRC 100827 / IM2).